A 499-amino-acid polypeptide reads, in one-letter code: Putative alpha-galactosidase 8 (499 aa).

N-linked (GlcNAc...) asparagine glycosylation is found at N154 and N191. Residue D238 is the Nucleophile of the active site. N-linked (GlcNAc...) asparagine glycosylation is present at N256. Residue D303 is the Proton donor of the active site.

This sequence belongs to the glycosyl hydrolase 27 family.

It localises to the secreted. It catalyses the reaction Hydrolysis of terminal, non-reducing alpha-D-galactose residues in alpha-D-galactosides, including galactose oligosaccharides, galactomannans and galactolipids.. Its function is as follows. Putative alpha-galactosidase involved in the degradation of simple oligosaccharides like melibiose, raffinose and stachyose, and of polymeric galacto(gluco)mannans. In Emericella nidulans (strain FGSC A4 / ATCC 38163 / CBS 112.46 / NRRL 194 / M139) (Aspergillus nidulans), this protein is Putative alpha-galactosidase 8 (agl8).